Here is a 578-residue protein sequence, read N- to C-terminus: MSRSATKILIWFFKHNKGELLDVFNAISAPLSLPSKRELKLLWIKNEKFVRLTTTLVMLLLPRRFRRDTKRNLSKFVRKLCYDQKYVYAMKSVNYIVRSMVIPFSTTEHHLLFKICSLIIDRMKPTMLFSKRPKVTPFKLLFSLRGDRVKTLNMPSFERHSFVHKFLTPNKRLSGGLQNAIITNLWERAENEEEMSLVVNPSNNYVKRLAYLEELRHNMTLLGLSDSMLLLQDMADYLTGGKMKYDLDDRRGQPCPMMDVDLLTAFMSMNAATRSKFFSKTLEVSYPECTCFTKCMGAIAQHPVLVKQFENEFCLNNFSTRICGECRLSHVIDNTTSGKPRKSLSACNPGMSSCSMDACTVTLILRYLIHERVDERHGNLIKYGHRFYITNSSAVTDTVYRGNNITCSSATGRTGGVCFGGSRTCYKLIQNLVKSSKQYGLPRPFADRNYWWSCHTCQGKYGTHVNPRNSNQYNRDRHGFFSEEIHRNTCVDTFYQNVLRKVRKDMVDKDKEEEDEVIEVAVKHCYPKICRWCKSAIMCRHTMDGLVNMLVTSPKSRVLLNKVVILSLLQKLIKIEWT.

This is an uncharacterized protein from Ostreid herpesvirus 1 (isolate France) (OsHV-1).